The primary structure comprises 107 residues: Magnetosome protein MmsF (107 aa).

The Cytoplasmic portion of the chain corresponds to 1–13 (MTEAILRSTLGAR). Residues 14–34 (TTVMAALSYLSVLCFVPLLVD) form a helical membrane-spanning segment. The Lumenal segment spans residues 35-46 (RDDEFVYFHAKQ). The helical transmembrane segment at 47–67 (GLVIWMWGVLALFALHVPVLG) threads the bilayer. Residues 68 to 69 (KW) are Cytoplasmic-facing. The chain crosses the membrane as a helical span at residues 70–90 (IFGFSSMGVLVFSLLGLVSVV). The Lumenal portion of the chain corresponds to 91 to 107 (FQRAWKLPLISWVAHRI).

The protein belongs to the magnetosome MamF/MmsF protein family. As to quaternary structure, may oligomerize.

It localises to the magnetosome membrane. Its function may be negatively regulated by one of the MamGFDC proteins. Functionally, plays a major role in synthesis of cubooctahedral magnetite crystals by controlling crystal growth and morphology after nucleation. Has a partially redundant function with MamF. When overexpressed in E.coli the soluble protein self assembles into shells of about 36 nm. This protein mediates the formation of magnetite nanoparticles from a solution of Fe(2+) and Fe(3+) sulfate; the crystals are larger and lack alternative iron oxide/oxyhydroxide species seen in the protein's absence. In Paramagnetospirillum magneticum (strain ATCC 700264 / AMB-1) (Magnetospirillum magneticum), this protein is Magnetosome protein MmsF.